The sequence spans 124 residues: Fluoride-specific ion channel FluC (124 aa).

The next 4 helical transmembrane spans lie at 4-24 (ILAIAVFGAVGCVARYLLAGG), 32-52 (AFPWGTLAVNVIGAFLIGLIM), 68-88 (GLTIGFLGGFTTFSTFSYETF), and 101-121 (LNVLASVALCLVGTWAGIMAA). The Na(+) site is built by glycine 75 and threonine 78.

The protein belongs to the fluoride channel Fluc/FEX (TC 1.A.43) family.

It is found in the cell inner membrane. The enzyme catalyses fluoride(in) = fluoride(out). With respect to regulation, na(+) is not transported, but it plays an essential structural role and its presence is essential for fluoride channel function. Functionally, fluoride-specific ion channel. Important for reducing fluoride concentration in the cell, thus reducing its toxicity. This Geobacter sulfurreducens (strain ATCC 51573 / DSM 12127 / PCA) protein is Fluoride-specific ion channel FluC.